A 302-amino-acid chain; its full sequence is MDQIRLTHLRQLEAESIHIIREVAAEFSNPVMLYSIGKDSSVMLHLARKAFYPGTLPFPLLHVDTGWKFREMYEFRDRTAKAYGCELLVHKNPEGVAMGINPFVHGSAKHTDIMKTEGLKQALNKYSFDAAFGGARRDEEKSRAKERIYSFRDRFHRWDPKNQRPELWHNYNGQINKGESIRVFPLSNWTEQDIWQYIWLENIDIVPLYLAAERPVLERDGMLMMIDDNRIDLQPGEVIKKRMVRFRTLGCWPLTGAVESNAQTLPEIIEEMLVSTTSERQGRVIDRDQAGSMELKKRQGYF.

This sequence belongs to the PAPS reductase family. CysD subfamily. As to quaternary structure, heterodimer composed of CysD, the smaller subunit, and CysN.

The catalysed reaction is sulfate + ATP + H(+) = adenosine 5'-phosphosulfate + diphosphate. It participates in sulfur metabolism; hydrogen sulfide biosynthesis; sulfite from sulfate: step 1/3. Its function is as follows. With CysN forms the ATP sulfurylase (ATPS) that catalyzes the adenylation of sulfate producing adenosine 5'-phosphosulfate (APS) and diphosphate, the first enzymatic step in sulfur assimilation pathway. APS synthesis involves the formation of a high-energy phosphoric-sulfuric acid anhydride bond driven by GTP hydrolysis by CysN coupled to ATP hydrolysis by CysD. The chain is Sulfate adenylyltransferase subunit 2 from Escherichia coli O9:H4 (strain HS).